A 226-amino-acid chain; its full sequence is MDTTPAAPDASFDLDPAEIRVLGVLVEKAFLTPDAYPLSVNALVAGCNQLTAREPVMALSEGEVQAAIDSLLARRLVSRRDQAGGRVAKYEHQLRLRHSLPPAEQAVLALLMLRGPQTPGELRSRSERMHRFDDIAAVEAVLEHLGEKYPPMAAALPRAPGTKEIRHMHLLGGAEALEAAAEGLASAAAGGTGRGRLAELEEEVQRLRSEVAELRAAFDTFRQQFD.

It belongs to the UPF0502 family.

This is UPF0502 protein azo0627 from Azoarcus sp. (strain BH72).